The following is a 247-amino-acid chain: Centromere protein H (247 aa).

M1 carries the N-acetylmethionine modification. Positions 1–14 (MEEQPQMQDADEPA) are enriched in acidic residues. Residues 1-34 (MEEQPQMQDADEPADSGGEGRAGGPPQVAGAQAA) are disordered. S16 bears the Phosphoserine mark. A compositionally biased stretch (low complexity) spans 24–34 (GPPQVAGAQAA). Residues 47-192 (RAQTKQQLLE…KIDLDSMENS (146 aa)) are a coiled coil. Residue K67 forms a Glycyl lysine isopeptide (Lys-Gly) (interchain with G-Cter in SUMO2) linkage. Phosphothreonine is present on T68.

This sequence belongs to the CENP-H/MCM16 family. As to quaternary structure, self-associates. Component of the CENPA-NAC complex, at least composed of CENPA, CENPC, CENPH, CENPM, CENPN, CENPT and CENPU. The CENPA-NAC complex interacts with the CENPA-CAD complex, composed of CENPI, CENPK, CENPL, CENPO, CENPP, CENPQ, CENPR and CENPS. Interacts directly with CENPK. Interacts with KIF2C and NDC80. Interacts with TRIM36.

The protein resides in the nucleus. Its subcellular location is the chromosome. The protein localises to the centromere. It localises to the kinetochore. Its function is as follows. Component of the CENPA-NAC (nucleosome-associated) complex, a complex that plays a central role in assembly of kinetochore proteins, mitotic progression and chromosome segregation. The CENPA-NAC complex recruits the CENPA-CAD (nucleosome distal) complex and may be involved in incorporation of newly synthesized CENPA into centromeres. Required for chromosome congression and efficiently align the chromosomes on a metaphase plate. The protein is Centromere protein H of Homo sapiens (Human).